A 445-amino-acid polypeptide reads, in one-letter code: 8-amino-7-oxononanoate synthase (445 aa).

Residue arginine 40 participates in substrate binding. Residue 131–132 (GY) participates in pyridoxal 5'-phosphate binding. Substrate is bound at residue histidine 156. Pyridoxal 5'-phosphate contacts are provided by serine 202, histidine 230, and threonine 258. Lysine 261 bears the N6-(pyridoxal phosphate)lysine mark. A substrate-binding site is contributed by threonine 377. Residues 408–445 (ASEGQTRRDAEQPPRSLRSLPPEGAAASLGAARRETAA) form a disordered region.

It belongs to the class-II pyridoxal-phosphate-dependent aminotransferase family. BioF subfamily. Homodimer. Pyridoxal 5'-phosphate is required as a cofactor.

It catalyses the reaction 6-carboxyhexanoyl-[ACP] + L-alanine + H(+) = (8S)-8-amino-7-oxononanoate + holo-[ACP] + CO2. Its pathway is cofactor biosynthesis; biotin biosynthesis. Its function is as follows. Catalyzes the decarboxylative condensation of pimeloyl-[acyl-carrier protein] and L-alanine to produce 8-amino-7-oxononanoate (AON), [acyl-carrier protein], and carbon dioxide. In Burkholderia ambifaria (strain MC40-6), this protein is 8-amino-7-oxononanoate synthase.